Here is a 616-residue protein sequence, read N- to C-terminus: Electron transfer flavoprotein-ubiquinone oxidoreductase, mitochondrial (616 aa).

Residues 1-32 (MLVRLTKLSCPAYQWFHALKIKKCLPLCAPRC) constitute a mitochondrion transit peptide. 70-84 (VVIVGAGPAGLSAAI) is an FAD binding site. At Lys95 the chain carries N6-acetyllysine. An intramembrane segment occupies 108-129 (IGAHTLSGACLDPAAFKELFPD). An N6-acetyllysine mark is found at Lys131 and Lys222. A ubiquinone contacts are provided by Gly304 and Gly305. N6-acetyllysine occurs at positions 356 and 415. An intramembrane segment occupies 427 to 446 (AGLHVTEYEDNLKQSWVWKE). Residue Ser550 is modified to Phosphoserine. The [4Fe-4S] cluster site is built by Cys560, Cys585, Cys588, and Cys591. The 4Fe-4S ferredoxin-type domain maps to 576–605 (FRLQINAQNCVHCKTCDIKDPSQNINWVVP).

It belongs to the ETF-QO/FixC family. Monomer. Requires [4Fe-4S] cluster as cofactor. It depends on FAD as a cofactor.

The protein resides in the mitochondrion inner membrane. It carries out the reaction a ubiquinone + reduced [electron-transfer flavoprotein] = a ubiquinol + oxidized [electron-transfer flavoprotein] + H(+). In terms of biological role, accepts electrons from ETF and reduces ubiquinone. This is Electron transfer flavoprotein-ubiquinone oxidoreductase, mitochondrial (Etfdh) from Rattus norvegicus (Rat).